The sequence spans 102 residues: UPF0213 protein XCC3072 (102 aa).

Residues 5–80 (KPWHLYLLLC…KQQPRARKLA (76 aa)) enclose the GIY-YIG domain.

It belongs to the UPF0213 family.

The sequence is that of UPF0213 protein XCC3072 from Xanthomonas campestris pv. campestris (strain ATCC 33913 / DSM 3586 / NCPPB 528 / LMG 568 / P 25).